We begin with the raw amino-acid sequence, 435 residues long: Serine--tRNA ligase (435 aa).

237–239 (TAE) contacts L-serine. ATP is bound at residue 268-270 (RSE). E291 provides a ligand contact to L-serine. ATP is bound at residue 355-358 (EISS). S390 contributes to the L-serine binding site.

Belongs to the class-II aminoacyl-tRNA synthetase family. Type-1 seryl-tRNA synthetase subfamily. In terms of assembly, homodimer. The tRNA molecule binds across the dimer.

Its subcellular location is the cytoplasm. The enzyme catalyses tRNA(Ser) + L-serine + ATP = L-seryl-tRNA(Ser) + AMP + diphosphate + H(+). It carries out the reaction tRNA(Sec) + L-serine + ATP = L-seryl-tRNA(Sec) + AMP + diphosphate + H(+). It participates in aminoacyl-tRNA biosynthesis; selenocysteinyl-tRNA(Sec) biosynthesis; L-seryl-tRNA(Sec) from L-serine and tRNA(Sec): step 1/1. Its function is as follows. Catalyzes the attachment of serine to tRNA(Ser). Is also able to aminoacylate tRNA(Sec) with serine, to form the misacylated tRNA L-seryl-tRNA(Sec), which will be further converted into selenocysteinyl-tRNA(Sec). This is Serine--tRNA ligase from Lactobacillus acidophilus (strain ATCC 700396 / NCK56 / N2 / NCFM).